The sequence spans 675 residues: DNA ligase (675 aa).

NAD(+)-binding positions include 35–39 (DSEYD), 84–85 (SL), and Glu-115. Catalysis depends on Lys-117, which acts as the N6-AMP-lysine intermediate. 4 residues coordinate NAD(+): Arg-138, Glu-175, Lys-292, and Lys-316. Residues Cys-410, Cys-413, Cys-428, and Cys-434 each contribute to the Zn(2+) site. The 83-residue stretch at 593–675 (QIVQPLLGRT…RNFLDDTSFP (83 aa)) folds into the BRCT domain.

The protein belongs to the NAD-dependent DNA ligase family. LigA subfamily. Mg(2+) is required as a cofactor. It depends on Mn(2+) as a cofactor.

The enzyme catalyses NAD(+) + (deoxyribonucleotide)n-3'-hydroxyl + 5'-phospho-(deoxyribonucleotide)m = (deoxyribonucleotide)n+m + AMP + beta-nicotinamide D-nucleotide.. Functionally, DNA ligase that catalyzes the formation of phosphodiester linkages between 5'-phosphoryl and 3'-hydroxyl groups in double-stranded DNA using NAD as a coenzyme and as the energy source for the reaction. It is essential for DNA replication and repair of damaged DNA. The chain is DNA ligase from Nitrosococcus oceani (strain ATCC 19707 / BCRC 17464 / JCM 30415 / NCIMB 11848 / C-107).